Reading from the N-terminus, the 164-residue chain is Glutamate uptake regulatory protein (164 aa).

Residues 5 to 66 (LDDFDIKILD…LLDPQKIGLG (62 aa)) form the HTH asnC-type domain. The H-T-H motif DNA-binding region spans 24-43 (MAELSEKTGLSANACWRRIR).

In terms of biological role, represses the secondary, H(+)-coupled glutamate uptake system (Gluemp) genes. In Zymomonas mobilis subsp. mobilis (strain ATCC 10988 / DSM 424 / LMG 404 / NCIMB 8938 / NRRL B-806 / ZM1), this protein is Glutamate uptake regulatory protein (grp).